The following is a 338-amino-acid chain: DNA-directed RNA polymerase subunit alpha (338 aa).

The segment at 1–234 (MIQKNWQELI…DQLEIFVNFE (234 aa)) is alpha N-terminal domain (alpha-NTD). The tract at residues 250–338 (FSPALLKKVD…ELAKRFEEHY (89 aa)) is alpha C-terminal domain (alpha-CTD).

Belongs to the RNA polymerase alpha chain family. In terms of assembly, homodimer. The RNAP catalytic core consists of 2 alpha, 1 beta, 1 beta' and 1 omega subunit. When a sigma factor is associated with the core the holoenzyme is formed, which can initiate transcription.

The enzyme catalyses RNA(n) + a ribonucleoside 5'-triphosphate = RNA(n+1) + diphosphate. Its function is as follows. DNA-dependent RNA polymerase catalyzes the transcription of DNA into RNA using the four ribonucleoside triphosphates as substrates. The protein is DNA-directed RNA polymerase subunit alpha of Xanthobacter autotrophicus (strain ATCC BAA-1158 / Py2).